Reading from the N-terminus, the 203-residue chain is Transmembrane emp24 domain-containing protein (203 aa).

The signal sequence occupies residues 1-22 (MASIRLLPSCIVLMFLARSSLC). Topologically, residues 23 to 170 (YFITIDAHGE…RSINDNTNSR (148 aa)) are lumenal. Residues 32-114 (EECFHDKVTS…PKVLKFSMDI (83 aa)) form the GOLD domain. A helical transmembrane segment spans residues 171–191 (VVWWSFFESLVLVAMTLGQVY). The Cytoplasmic segment spans residues 192–203 (YLKRFFEVRRVV).

Belongs to the EMP24/GP25L family.

The protein resides in the cytoplasmic vesicle membrane. Functionally, could have a role in the budding of coatomer-coated and other species of coated vesicles. The sequence is that of Transmembrane emp24 domain-containing protein from Nematostella vectensis (Starlet sea anemone).